Consider the following 462-residue polypeptide: Probable acid phosphatase SPBC4.06 (462 aa).

The active-site Nucleophile is the histidine 35. The active-site Proton donor is the aspartate 330.

It belongs to the histidine acid phosphatase family.

The protein localises to the mitochondrion. It carries out the reaction a phosphate monoester + H2O = an alcohol + phosphate. This Schizosaccharomyces pombe (strain 972 / ATCC 24843) (Fission yeast) protein is Probable acid phosphatase SPBC4.06.